Consider the following 1296-residue polypeptide: Aggregation substance (1296 aa).

A signal peptide spans 1–43 (MKQQTEVKKRFKMYKAKKHWVVAPILFIGVLGVVGLATDDVQA). 2 disordered regions span residues 48–188 (TQPG…KPAE) and 1221–1245 (HTPE…TPQA). Positions 89–99 (KVEEVASEKNG) are enriched in basic and acidic residues. Composition is skewed to polar residues over residues 100–117 (AEQS…QQPT) and 125–138 (QEQP…TNEP). Basic and acidic residues predominate over residues 160–178 (KEFETPDVDKAVDEAKKDP). An LPXTG sorting signal motif is present at residues 1261-1265 (LPQTG). Thr-1264 bears the Pentaglycyl murein peptidoglycan amidated threonine mark. Residues 1265-1296 (GEKQNVLLTVAGSLAAMLGLAGLGFKRRKETK) constitute a propeptide, removed by sortase.

This sequence belongs to the antigen I/II family.

Its subcellular location is the secreted. The protein localises to the cell wall. Its function is as follows. Aggregation substance allows donor and recipient strains to form tight aggregates which allow the non-motile bacteria to maintain physical contact over a period of time sufficient to permit conjugative transfer of the sex pheromone plasmid from donor to recipient strains. The chain is Aggregation substance (asa1) from Enterococcus faecalis (strain ATCC 700802 / V583).